The chain runs to 354 residues: 3-dehydroquinate synthase (354 aa).

Residues aspartate 39, tyrosine 45, 68–71 (EKTK), 100–104 (GATGD), 124–125 (TT), lysine 136, lysine 145, and 163–166 (FLKT) contribute to the NAD(+) site. Residues glutamate 178, histidine 242, and histidine 256 each coordinate Zn(2+).

Belongs to the sugar phosphate cyclases superfamily. Dehydroquinate synthase family. The cofactor is NAD(+). Co(2+) serves as cofactor. Requires Zn(2+) as cofactor.

The protein resides in the cytoplasm. The enzyme catalyses 7-phospho-2-dehydro-3-deoxy-D-arabino-heptonate = 3-dehydroquinate + phosphate. It participates in metabolic intermediate biosynthesis; chorismate biosynthesis; chorismate from D-erythrose 4-phosphate and phosphoenolpyruvate: step 2/7. Functionally, catalyzes the conversion of 3-deoxy-D-arabino-heptulosonate 7-phosphate (DAHP) to dehydroquinate (DHQ). The chain is 3-dehydroquinate synthase from Staphylococcus aureus (strain MRSA252).